A 152-amino-acid polypeptide reads, in one-letter code: Orientotoxin-1 (152 aa).

In terms of tissue distribution, expressed by the venom gland.

It is found in the secreted. The enzyme catalyses a 1-acyl-sn-glycero-3-phosphocholine + H2O = sn-glycerol 3-phosphocholine + a fatty acid + H(+). Neurotoxin of presynaptic effect which degrades lysophospholipids. This Vespa orientalis (Oriental hornet) protein is Orientotoxin-1.